The primary structure comprises 451 residues: Phosphoglucosamine mutase (451 aa).

Serine 107 (phosphoserine intermediate) is an active-site residue. Mg(2+) contacts are provided by serine 107, aspartate 246, aspartate 248, and aspartate 250. A Phosphoserine modification is found at serine 107.

It belongs to the phosphohexose mutase family. It depends on Mg(2+) as a cofactor. Post-translationally, activated by phosphorylation.

It catalyses the reaction alpha-D-glucosamine 1-phosphate = D-glucosamine 6-phosphate. Functionally, catalyzes the conversion of glucosamine-6-phosphate to glucosamine-1-phosphate. The chain is Phosphoglucosamine mutase from Burkholderia cenocepacia (strain ATCC BAA-245 / DSM 16553 / LMG 16656 / NCTC 13227 / J2315 / CF5610) (Burkholderia cepacia (strain J2315)).